A 187-amino-acid polypeptide reads, in one-letter code: MSVLKDRYENEIKQSLLKDMNLSSTMAIPKIEKIIINMGVTQAVTDKKYVDSAVEELSQIAGQRAVVTRAKKSIANFKLRQGMPIGCRVTLRGERMYDFLERLIFIALPRVRDFQGIPRRGFDGNGNYNLGIKEHTIFPEISFDKTDAVKGLNITIVTTADNDDMARTLLERVGLPFRAAPKSQENK.

Belongs to the universal ribosomal protein uL5 family. As to quaternary structure, part of the 50S ribosomal subunit; part of the 5S rRNA/L5/L18/L25 subcomplex. Contacts the 5S rRNA and the P site tRNA. Forms a bridge to the 30S subunit in the 70S ribosome.

Functionally, this is one of the proteins that bind and probably mediate the attachment of the 5S RNA into the large ribosomal subunit, where it forms part of the central protuberance. In the 70S ribosome it contacts protein S13 of the 30S subunit (bridge B1b), connecting the 2 subunits; this bridge is implicated in subunit movement. Contacts the P site tRNA; the 5S rRNA and some of its associated proteins might help stabilize positioning of ribosome-bound tRNAs. This chain is Large ribosomal subunit protein uL5, found in Brachyspira hyodysenteriae (strain ATCC 49526 / WA1).